The primary structure comprises 87 residues: DNA-directed RNA polymerase subunit omega (87 aa).

Belongs to the RNA polymerase subunit omega family. The RNAP catalytic core consists of 2 alpha, 1 beta, 1 beta' and 1 omega subunit. When a sigma factor is associated with the core the holoenzyme is formed, which can initiate transcription.

The enzyme catalyses RNA(n) + a ribonucleoside 5'-triphosphate = RNA(n+1) + diphosphate. Its function is as follows. Promotes RNA polymerase assembly. Latches the N- and C-terminal regions of the beta' subunit thereby facilitating its interaction with the beta and alpha subunits. This is DNA-directed RNA polymerase subunit omega from Leifsonia xyli subsp. xyli (strain CTCB07).